The sequence spans 364 residues: UDP-3-O-acylglucosamine N-acyltransferase (364 aa).

The active-site Proton acceptor is the His-258.

It belongs to the transferase hexapeptide repeat family. LpxD subfamily. Homotrimer.

It carries out the reaction a UDP-3-O-[(3R)-3-hydroxyacyl]-alpha-D-glucosamine + a (3R)-hydroxyacyl-[ACP] = a UDP-2-N,3-O-bis[(3R)-3-hydroxyacyl]-alpha-D-glucosamine + holo-[ACP] + H(+). It participates in bacterial outer membrane biogenesis; LPS lipid A biosynthesis. Its function is as follows. Catalyzes the N-acylation of UDP-3-O-acylglucosamine using 3-hydroxyacyl-ACP as the acyl donor. Is involved in the biosynthesis of lipid A, a phosphorylated glycolipid that anchors the lipopolysaccharide to the outer membrane of the cell. The sequence is that of UDP-3-O-acylglucosamine N-acyltransferase from Burkholderia orbicola (strain AU 1054).